We begin with the raw amino-acid sequence, 325 residues long: Beta-ketoacyl-[acyl-carrier-protein] synthase III (325 aa).

Residues Cys119 and His252 contribute to the active site. Positions 253-257 (QANLR) are ACP-binding. Asn282 is a catalytic residue.

The protein belongs to the thiolase-like superfamily. FabH family. In terms of assembly, homodimer.

It is found in the cytoplasm. It catalyses the reaction malonyl-[ACP] + acetyl-CoA + H(+) = 3-oxobutanoyl-[ACP] + CO2 + CoA. It participates in lipid metabolism; fatty acid biosynthesis. In terms of biological role, catalyzes the condensation reaction of fatty acid synthesis by the addition to an acyl acceptor of two carbons from malonyl-ACP. Catalyzes the first condensation reaction which initiates fatty acid synthesis and may therefore play a role in governing the total rate of fatty acid production. Possesses both acetoacetyl-ACP synthase and acetyl transacylase activities. Its substrate specificity determines the biosynthesis of branched-chain and/or straight-chain of fatty acids. The chain is Beta-ketoacyl-[acyl-carrier-protein] synthase III from Polaromonas naphthalenivorans (strain CJ2).